Reading from the N-terminus, the 462-residue chain is Putative zinc metalloprotease RSc1411 (462 aa).

A helical membrane pass occupies residues 1-21 (MLTVLAFVFAIAVLIVVHELG). H18 is a binding site for Zn(2+). Residue E19 is part of the active site. Zn(2+) is bound at residue H22. Residues 102-124 (FAIVAAGPVFNFLLAIALYALLA) form a helical membrane-spanning segment. The PDZ domain maps to 201-283 (TVRLRELPSA…MPEQNASIDI (83 aa)). 2 helical membrane passes run 386-406 (FVAF…LPVP) and 430-450 (WQAV…SLAL).

The protein belongs to the peptidase M50B family. Zn(2+) is required as a cofactor.

The protein localises to the cell inner membrane. In Ralstonia nicotianae (strain ATCC BAA-1114 / GMI1000) (Ralstonia solanacearum), this protein is Putative zinc metalloprotease RSc1411.